The primary structure comprises 838 residues: Ribonuclease Z (838 aa).

Ser824 carries the phosphoserine modification.

Belongs to the RNase Z family. As to quaternary structure, homodimer. Requires Zn(2+) as cofactor.

It is found in the cytoplasm. Its subcellular location is the nucleus. The enzyme catalyses Endonucleolytic cleavage of RNA, removing extra 3' nucleotides from tRNA precursor, generating 3' termini of tRNAs. A 3'-hydroxy group is left at the tRNA terminus and a 5'-phosphoryl group is left at the trailer molecule.. Functionally, zinc phosphodiesterase, which displays some tRNA 3'-processing endonuclease activity. Probably involved in tRNA maturation, by removing a 3'-trailer from precursor tRNA. The polypeptide is Ribonuclease Z (TRZ1) (Saccharomyces cerevisiae (strain ATCC 204508 / S288c) (Baker's yeast)).